The chain runs to 170 residues: NADH-ubiquinone oxidoreductase chain 2 (170 aa).

4 consecutive transmembrane segments (helical) span residues 24–44 (LLWMTYFLLYSLLSISIIMMF), 67–87 (FLIFLNLLSLGGLPPFLGFLP), 101–121 (LFILTISVCLTLITLYFYLRL), and 150–170 (LILNFISIGGLLMILMFYMIL).

The protein belongs to the complex I subunit 2 family.

Its subcellular location is the mitochondrion inner membrane. It catalyses the reaction a ubiquinone + NADH + 5 H(+)(in) = a ubiquinol + NAD(+) + 4 H(+)(out). Functionally, core subunit of the mitochondrial membrane respiratory chain NADH dehydrogenase (Complex I) that is believed to belong to the minimal assembly required for catalysis. Complex I functions in the transfer of electrons from NADH to the respiratory chain. The immediate electron acceptor for the enzyme is believed to be ubiquinone. The protein is NADH-ubiquinone oxidoreductase chain 2 (ND2) of Anopheles albimanus (New world malaria mosquito).